The primary structure comprises 541 residues: MGIHSLLYCERLFYLEEVEGILVADDRVYAGRTLHEELEPNEDSSGRIESFHYTSEKLEVSGKVDRIQKRDGDWIPYEHKRGRARIGTNGPEAWESDQCQVTVYALLLEEATGRNISEGKIRYHGSKDLVKIEIDEELRSKALKTIDRAKGLSTSTNRPPVAQNENLCKNCSLAPVCLPEETRVITENEYEPIRLFPEKREKTTLHVFGHDSRIKKSDNVLLVEKVTETGEKSKSEKIPIQEIESVNIHGNCQISSQMIKFLVSEEIPVHWFSGGGNYIGGININPSGVQRRIRQFKALTKETIRLNLAKKLVSAKCESQLRYLLRATRGKDETRNETESYLATIRSGLKNIESADSPSQLLGIEGSSARAYFSGLPALLKNSDPFLVPNGRSKRPPKDPFNATLSFLYSLLYKSVRQAIIAVGLDPSFGFYHTPRSSAEPLVLDLMELFRVSLCDMTLIGSINRKSWIDEDFEITKNKVWLSESGRKKATQLYETRLDDTWKHPVVNYSLSYYRMIELEVRLLEKEWSGEANIFAQARLR.

The interval M1–P179 is CRISPR-associated exonuclease Cas4. A [4Fe-4S] cluster-binding site is contributed by C9. D65 and E78 together coordinate Mn(2+). 3 residues coordinate [4Fe-4S] cluster: C168, C171, and C177. The CRISPR-associated endonuclease Cas1 stretch occupies residues T204–R541. Positions 365, 433, and 448 each coordinate Mn(2+).

This sequence in the N-terminal section; belongs to the CRISPR-associated exonuclease Cas4 family. The protein in the C-terminal section; belongs to the CRISPR-associated endonuclease Cas1 family. As to quaternary structure, homodimer, forms a heterotetramer with a Cas2 homodimer. [4Fe-4S] cluster is required as a cofactor. Mg(2+) serves as cofactor. The cofactor is Mn(2+).

The enzyme catalyses exonucleolytic cleavage in the 5'- to 3'-direction to yield nucleoside 3'-phosphates.. Its function is as follows. CRISPR (clustered regularly interspaced short palindromic repeat), is an adaptive immune system that provides protection against mobile genetic elements (viruses, transposable elements and conjugative plasmids). CRISPR clusters contain spacers, sequences complementary to antecedent mobile elements, and target invading nucleic acids. CRISPR clusters are transcribed and processed into CRISPR RNA (crRNA). The Cas4 region acts as a ssDNA exonuclease, while the Cas1 region acts as a dsDNA endonuclease. Involved in the integration of spacer DNA into the CRISPR cassette. This Leptospira interrogans serogroup Icterohaemorrhagiae serovar Lai (strain 56601) protein is CRISPR-associated exonuclease Cas4/endonuclease Cas1 fusion (cas4-cas1).